Consider the following 448-residue polypeptide: MSHEEDLIDYSDEELQTTDAAATTAAPAANGAQDKKGDLTVSGGRPDKKGSYVGIHSTGFRDFLLKGELLRAITDCGFEHPSEVQQVCIPTAILNVDVLCQAKSGLGKTAVFVLTTLHQLEPVPGECSVLVMCHTRELAYQIKNEYARFSKYLPDVKTAVFYGGTPIQKDIEVLSNKESYPNIVVGTPGRLNALVREKKLSLRNVKAFVLDECDKMLDQIGKQAQIAHMRRDVQEIFRATPADKQVMMFSATLSQEIRPICKKFMRNPLEVYVDDDTKLTLHGLQQYYIKLSESEKNRKLNELLDSLEFNQVIIFVKSTLRANELDKLLRECNFPSIAVHSGVSQEERIKRYKEFKEFNKRICVATDVFGRGIDIERINLAINYDLPADADSYLHRVGRAGRFGTKGLSISFVSSEEDEKVLKEIEKRFEVALPEYPEGGVDSSTYMA.

Positions 19–29 (DAAATTAAPAA) are enriched in low complexity. Residues 19–43 (DAAATTAAPAANGAQDKKGDLTVSG) form a disordered region. A Q motif motif is present at residues 58–86 (TGFRDFLLKGELLRAITDCGFEHPSEVQQ). The 183-residue stretch at 89 to 271 (IPTAILNVDV…KKFMRNPLEV (183 aa)) folds into the Helicase ATP-binding domain. Residue 102–109 (AKSGLGKT) coordinates ATP. Positions 211 to 214 (DECD) match the DECD box motif. A Helicase C-terminal domain is found at 283–444 (GLQQYYIKLS…EYPEGGVDSS (162 aa)).

It belongs to the DEAD box helicase family. DECD subfamily.

Its subcellular location is the nucleus. It catalyses the reaction ATP + H2O = ADP + phosphate + H(+). ATP-binding RNA helicase involved in transcription elongation and required for the export of mRNA out of the nucleus. SUB2 also plays a role in pre-mRNA splicing and spliceosome assembly. May be involved in rDNA and telomeric silencing, and maintenance of genome integrity. The polypeptide is ATP-dependent RNA helicase sub2 (sub2) (Aspergillus fumigatus (strain ATCC MYA-4609 / CBS 101355 / FGSC A1100 / Af293) (Neosartorya fumigata)).